Consider the following 77-residue polypeptide: Sec-independent protein translocase protein TatA (77 aa).

The chain crosses the membrane as a helical span at residues 1–21 (MGSLSIWHWIVVIAVVLLLFG). Basic and acidic residues predominate over residues 43–60 (MQDDDKAPEKTEPVKSID). The disordered stretch occupies residues 43–77 (MQDDDKAPEKTEPVKSIDHGATPSATRTDVGSKAV).

Belongs to the TatA/E family. The Tat system comprises two distinct complexes: a TatABC complex, containing multiple copies of TatA, TatB and TatC subunits, and a separate TatA complex, containing only TatA subunits. Substrates initially bind to the TatABC complex, which probably triggers association of the separate TatA complex to form the active translocon.

It localises to the cell inner membrane. In terms of biological role, part of the twin-arginine translocation (Tat) system that transports large folded proteins containing a characteristic twin-arginine motif in their signal peptide across membranes. TatA could form the protein-conducting channel of the Tat system. This chain is Sec-independent protein translocase protein TatA, found in Bradyrhizobium sp. (strain BTAi1 / ATCC BAA-1182).